A 321-amino-acid chain; its full sequence is Lipoyl synthase (321 aa).

Residues Cys68, Cys73, Cys79, Cys94, Cys98, Cys101, and Ser308 each coordinate [4Fe-4S] cluster. A Radical SAM core domain is found at 80–297 (FNHGTATFMI…KAEALAMGFT (218 aa)).

It belongs to the radical SAM superfamily. Lipoyl synthase family. [4Fe-4S] cluster is required as a cofactor.

It is found in the cytoplasm. The enzyme catalyses [[Fe-S] cluster scaffold protein carrying a second [4Fe-4S](2+) cluster] + N(6)-octanoyl-L-lysyl-[protein] + 2 oxidized [2Fe-2S]-[ferredoxin] + 2 S-adenosyl-L-methionine + 4 H(+) = [[Fe-S] cluster scaffold protein] + N(6)-[(R)-dihydrolipoyl]-L-lysyl-[protein] + 4 Fe(3+) + 2 hydrogen sulfide + 2 5'-deoxyadenosine + 2 L-methionine + 2 reduced [2Fe-2S]-[ferredoxin]. Its pathway is protein modification; protein lipoylation via endogenous pathway; protein N(6)-(lipoyl)lysine from octanoyl-[acyl-carrier-protein]: step 2/2. Catalyzes the radical-mediated insertion of two sulfur atoms into the C-6 and C-8 positions of the octanoyl moiety bound to the lipoyl domains of lipoate-dependent enzymes, thereby converting the octanoylated domains into lipoylated derivatives. This chain is Lipoyl synthase, found in Edwardsiella ictaluri (strain 93-146).